Here is a 33-residue protein sequence, read N- to C-terminus: Mu-theraphotoxin-Osp1b (33 aa).

3 disulfide bridges follow: C2-C17, C9-C22, and C16-C29.

Belongs to the neurotoxin 10 (Hwtx-1) family. 22 (Htx-4) subfamily. As to expression, expressed by the venom gland.

It localises to the secreted. Functionally, voltage-gated sodium channel Nav1.7/SCN9A inhibitor. The protein is Mu-theraphotoxin-Osp1b of Orphnaecus sp. (strain Maanghit-Cave/Philippines) (Tarantula spider).